Reading from the N-terminus, the 153-residue chain is uncharacterized protein (153 aa).

This is an uncharacterized protein from Alkalihalophilus pseudofirmus (strain ATCC BAA-2126 / JCM 17055 / OF4) (Bacillus pseudofirmus).